The primary structure comprises 241 residues: Pyridoxal phosphate phosphatase PHOSPHO2 (241 aa).

Aspartate 8 functions as the Nucleophile in the catalytic mechanism. Residues aspartate 8 and aspartate 10 each coordinate Mg(2+). Residue aspartate 10 is the Proton donor of the active site. The substrate site is built by aspartate 19 and aspartate 99. Aspartate 179 contributes to the Mg(2+) binding site.

The protein belongs to the HAD-like hydrolase superfamily. PHOSPHO family. Requires Mg(2+) as cofactor.

The catalysed reaction is pyridoxal 5'-phosphate + H2O = pyridoxal + phosphate. Phosphatase that has high activity toward pyridoxal 5'-phosphate (PLP). Also active at much lower level toward pyrophosphate, phosphoethanolamine (PEA), phosphocholine (PCho), phospho-l-tyrosine, fructose-6-phosphate, p-nitrophenyl phosphate, and h-glycerophosphate. This is Pyridoxal phosphate phosphatase PHOSPHO2 (PHOSPHO2) from Bos taurus (Bovine).